We begin with the raw amino-acid sequence, 142 residues long: Hemoglobin subunit alpha-A (142 aa).

Residues 2–142 enclose the Globin domain; sequence VLSAADKTNV…VGAVLTAKYR (141 aa). His-59 is an O2 binding site. His-88 is a binding site for heme b.

The protein belongs to the globin family. Heterotetramer of two alpha chains and two beta chains. Red blood cells.

In terms of biological role, involved in oxygen transport from the lung to the various peripheral tissues. This is Hemoglobin subunit alpha-A (HBAA) from Anas platyrhynchos (Mallard).